We begin with the raw amino-acid sequence, 144 residues long: Cystatin-F (144 aa).

The signal sequence occupies residues Met-1 to Gly-18. Residue Asn-61 is glycosylated (N-linked (GlcNAc...) asparagine). The short motif at Gln-80–Gly-84 is the Secondary area of contact element. Cystine bridges form between Cys-98–Cys-109 and Cys-123–Cys-143.

The protein belongs to the cystatin family.

The protein localises to the secreted. Inhibits papain and cathepsin L but with affinities lower than other cystatins. May play a role in immune regulation through inhibition of a unique target in the hematopoietic system. In Mus musculus (Mouse), this protein is Cystatin-F (Cst7).